Reading from the N-terminus, the 314-residue chain is DNA-directed RNA polymerase subunit alpha (314 aa).

An alpha N-terminal domain (alpha-NTD) region spans residues 1–228 (MIEIEKPKIE…EHLNIFVGLT (228 aa)). Residues 245 to 314 (KEKVLEMTIE…ELGLGLRKDD (70 aa)) form an alpha C-terminal domain (alpha-CTD) region.

This sequence belongs to the RNA polymerase alpha chain family. Homodimer. The RNAP catalytic core consists of 2 alpha, 1 beta, 1 beta' and 1 omega subunit. When a sigma factor is associated with the core the holoenzyme is formed, which can initiate transcription.

The catalysed reaction is RNA(n) + a ribonucleoside 5'-triphosphate = RNA(n+1) + diphosphate. Its function is as follows. DNA-dependent RNA polymerase catalyzes the transcription of DNA into RNA using the four ribonucleoside triphosphates as substrates. The sequence is that of DNA-directed RNA polymerase subunit alpha from Bacillus licheniformis (strain ATCC 14580 / DSM 13 / JCM 2505 / CCUG 7422 / NBRC 12200 / NCIMB 9375 / NCTC 10341 / NRRL NRS-1264 / Gibson 46).